A 254-amino-acid chain; its full sequence is tRNA uridine(34) hydroxylase (254 aa).

The 95-residue stretch at 123 to 217 folds into the Rhodanese domain; the sequence is QDPNVILLDT…YLESIPEGES (95 aa). Cys177 acts as the Cysteine persulfide intermediate in catalysis.

The protein belongs to the TrhO family.

It catalyses the reaction uridine(34) in tRNA + AH2 + O2 = 5-hydroxyuridine(34) in tRNA + A + H2O. Functionally, catalyzes oxygen-dependent 5-hydroxyuridine (ho5U) modification at position 34 in tRNAs. This is tRNA uridine(34) hydroxylase from Legionella pneumophila (strain Lens).